A 465-amino-acid chain; its full sequence is D-ornithine/D-lysine decarboxylase (465 aa).

Position 80 is an N6-(pyridoxal phosphate)lysine (K80). Residues G259 and 307-310 contribute to the pyridoxal 5'-phosphate site; that span reads EPGR. Residue C387 is the Proton donor of the active site. Residue Y422 participates in pyridoxal 5'-phosphate binding.

The protein belongs to the Orn/Lys/Arg decarboxylase class-II family. In terms of assembly, homodimer. Pyridoxal 5'-phosphate serves as cofactor.

It catalyses the reaction D-ornithine + H(+) = putrescine + CO2. The catalysed reaction is D-lysine + H(+) = cadaverine + CO2. Functionally, catalyzes the decarboxylation of D-ornithine and D-lysine. Ornithine is likely the physiological substrate. Has no detectable diaminopimelate decarboxylase activity in vitro. In Salmonella typhimurium (strain LT2 / SGSC1412 / ATCC 700720), this protein is D-ornithine/D-lysine decarboxylase.